The chain runs to 243 residues: 1-(5-phosphoribosyl)-5-[(5-phosphoribosylamino)methylideneamino] imidazole-4-carboxamide isomerase (243 aa).

Residue Asp-8 is the Proton acceptor of the active site. Residue Asp-129 is the Proton donor of the active site.

Belongs to the HisA/HisF family.

The protein localises to the cytoplasm. It catalyses the reaction 1-(5-phospho-beta-D-ribosyl)-5-[(5-phospho-beta-D-ribosylamino)methylideneamino]imidazole-4-carboxamide = 5-[(5-phospho-1-deoxy-D-ribulos-1-ylimino)methylamino]-1-(5-phospho-beta-D-ribosyl)imidazole-4-carboxamide. It functions in the pathway amino-acid biosynthesis; L-histidine biosynthesis; L-histidine from 5-phospho-alpha-D-ribose 1-diphosphate: step 4/9. The polypeptide is 1-(5-phosphoribosyl)-5-[(5-phosphoribosylamino)methylideneamino] imidazole-4-carboxamide isomerase (Parvibaculum lavamentivorans (strain DS-1 / DSM 13023 / NCIMB 13966)).